The primary structure comprises 287 residues: Phosphatidylserine decarboxylase proenzyme (287 aa).

Residues D90, H147, and S252 each act as charge relay system; for autoendoproteolytic cleavage activity in the active site. S252 serves as the catalytic Schiff-base intermediate with substrate; via pyruvic acid; for decarboxylase activity. A Pyruvic acid (Ser); by autocatalysis modification is found at S252.

It belongs to the phosphatidylserine decarboxylase family. PSD-B subfamily. Prokaryotic type I sub-subfamily. Heterodimer of a large membrane-associated beta subunit and a small pyruvoyl-containing alpha subunit. The cofactor is pyruvate. Post-translationally, is synthesized initially as an inactive proenzyme. Formation of the active enzyme involves a self-maturation process in which the active site pyruvoyl group is generated from an internal serine residue via an autocatalytic post-translational modification. Two non-identical subunits are generated from the proenzyme in this reaction, and the pyruvate is formed at the N-terminus of the alpha chain, which is derived from the carboxyl end of the proenzyme. The autoendoproteolytic cleavage occurs by a canonical serine protease mechanism, in which the side chain hydroxyl group of the serine supplies its oxygen atom to form the C-terminus of the beta chain, while the remainder of the serine residue undergoes an oxidative deamination to produce ammonia and the pyruvoyl prosthetic group on the alpha chain. During this reaction, the Ser that is part of the protease active site of the proenzyme becomes the pyruvoyl prosthetic group, which constitutes an essential element of the active site of the mature decarboxylase.

The protein resides in the cell membrane. The enzyme catalyses a 1,2-diacyl-sn-glycero-3-phospho-L-serine + H(+) = a 1,2-diacyl-sn-glycero-3-phosphoethanolamine + CO2. The protein operates within phospholipid metabolism; phosphatidylethanolamine biosynthesis; phosphatidylethanolamine from CDP-diacylglycerol: step 2/2. Its function is as follows. Catalyzes the formation of phosphatidylethanolamine (PtdEtn) from phosphatidylserine (PtdSer). The chain is Phosphatidylserine decarboxylase proenzyme from Pseudomonas putida (strain W619).